A 451-amino-acid chain; its full sequence is Nicotinamide phosphoribosyltransferase (451 aa).

R209 contacts diphosphate. D232 is a binding site for beta-nicotinamide D-ribonucleotide. Positions 248 and 309 each coordinate diphosphate. Beta-nicotinamide D-ribonucleotide contacts are provided by residues 309–311 (RPD), 364–365 (GD), and R403.

Belongs to the NAPRTase family.

It catalyses the reaction beta-nicotinamide D-ribonucleotide + diphosphate = 5-phospho-alpha-D-ribose 1-diphosphate + nicotinamide + H(+). It functions in the pathway cofactor biosynthesis; NAD(+) biosynthesis; nicotinamide D-ribonucleotide from 5-phospho-alpha-D-ribose 1-diphosphate and nicotinamide: step 1/1. Catalyzes the condensation of nicotinamide with 5-phosphoribosyl-1-pyrophosphate to yield nicotinamide mononucleotide, an intermediate in the biosynthesis of NAD. This chain is Nicotinamide phosphoribosyltransferase, found in Mycoplasma pneumoniae (strain ATCC 29342 / M129 / Subtype 1) (Mycoplasmoides pneumoniae).